The following is a 962-amino-acid chain: Nonribosomal peptide synthetase atqA (962 aa).

The interval 34–462 (AANTTEGIIA…DGRTKEMVNI (429 aa)) is adenylation (A) domain. Residues 595 to 672 (SAEEATILSI…GLCQRIAATS (78 aa)) enclose the Carrier domain. Serine 630 is subject to O-(pantetheine 4'-phosphoryl)serine. Positions 694 to 951 (PLWLVHPGVG…KPEYVANFAK (258 aa)) are thioesterase (TE) domain.

This sequence belongs to the NRP synthetase family.

Its pathway is secondary metabolite biosynthesis. Its function is as follows. Nonribosomal peptide synthetase; part of the gene cluster that mediates the biosynthesis of asterriquinone CT5, a natural product that displays potential biological activities including antitumor and insulin mimic activities. The nonribosomal peptide synthetase atqA is responsible for the production of the benzoquinone derivative didemethylasterriquinone D (DDAQ D), via condensation of 2 indole pyruvic acid (IPA) molecules. The symmetric connectivity of the 2 IPA molecules is thought to arise by head-to-tail dual Claisen condensations catalyzed by the TE domain of atqA. DDAQ D represents the core structure of asterriquinones and is further modified by yet unidentified tailoring enzymes to lead to the production of asterriquinone CT5. This chain is Nonribosomal peptide synthetase atqA, found in Aspergillus terreus (strain NIH 2624 / FGSC A1156).